Reading from the N-terminus, the 623-residue chain is Putative chaperone protein ClpB2, chloroplastic (623 aa).

One can recognise a Clp R domain in the interval 1 to 123; the sequence is MNDLKFDPNV…KSEVEKLRGE (123 aa). 2 repeat regions span residues 6–71 and 77–123; these read FDPN…NQSL and RNLG…LRGE. The segment at 129–375 is i; sequence LKTYGTDLVE…HVKAQLDIQP (247 aa). 172-179 contributes to the ATP binding site; the sequence is GEPGVGKT. A coiled-coil region spans residues 368–462; that stretch reads KAQLDIQPEE…LQEAERQHDV (95 aa). 571–578 serves as a coordination point for ATP; it reads GPTGVGKT.

Belongs to the ClpA/ClpB family.

This Arabidopsis thaliana (Mouse-ear cress) protein is Putative chaperone protein ClpB2, chloroplastic (CLPB2).